Here is a 268-residue protein sequence, read N- to C-terminus: Undecaprenyl-diphosphatase (268 aa).

The next 7 membrane-spanning stretches (helical) occupy residues Phe43–Tyr63, Phe83–Lys103, Leu109–Val129, Phe144–Val164, Ala184–Phe204, Ile218–Leu238, and Phe246–Leu266.

This sequence belongs to the UppP family.

The protein resides in the cell inner membrane. It catalyses the reaction di-trans,octa-cis-undecaprenyl diphosphate + H2O = di-trans,octa-cis-undecaprenyl phosphate + phosphate + H(+). Functionally, catalyzes the dephosphorylation of undecaprenyl diphosphate (UPP). Confers resistance to bacitracin. In Nitrobacter hamburgensis (strain DSM 10229 / NCIMB 13809 / X14), this protein is Undecaprenyl-diphosphatase.